The chain runs to 664 residues: Glycine--tRNA ligase beta subunit (664 aa).

Belongs to the class-II aminoacyl-tRNA synthetase family. As to quaternary structure, tetramer of two alpha and two beta subunits.

It localises to the cytoplasm. The catalysed reaction is tRNA(Gly) + glycine + ATP = glycyl-tRNA(Gly) + AMP + diphosphate. The sequence is that of Glycine--tRNA ligase beta subunit from Rickettsia typhi (strain ATCC VR-144 / Wilmington).